The following is a 170-amino-acid chain: Peptide deformylase (170 aa).

Residues C91 and H133 each contribute to the Fe cation site. E134 is an active-site residue. H137 lines the Fe cation pocket.

This sequence belongs to the polypeptide deformylase family. Fe(2+) is required as a cofactor.

The catalysed reaction is N-terminal N-formyl-L-methionyl-[peptide] + H2O = N-terminal L-methionyl-[peptide] + formate. In terms of biological role, removes the formyl group from the N-terminal Met of newly synthesized proteins. Requires at least a dipeptide for an efficient rate of reaction. N-terminal L-methionine is a prerequisite for activity but the enzyme has broad specificity at other positions. This is Peptide deformylase from Pasteurella multocida (strain Pm70).